Here is a 966-residue protein sequence, read N- to C-terminus: Alanine--tRNA ligase (966 aa).

4 residues coordinate Zn(2+): H646, H650, C750, and H754. The interval 927–949 (DRLGGGGGGRPSLASAGGRDPEA) is disordered.

This sequence belongs to the class-II aminoacyl-tRNA synthetase family. The cofactor is Zn(2+).

It localises to the cytoplasm. It catalyses the reaction tRNA(Ala) + L-alanine + ATP = L-alanyl-tRNA(Ala) + AMP + diphosphate. In terms of biological role, catalyzes the attachment of alanine to tRNA(Ala) in a two-step reaction: alanine is first activated by ATP to form Ala-AMP and then transferred to the acceptor end of tRNA(Ala). Also edits incorrectly charged Ser-tRNA(Ala) and Gly-tRNA(Ala) via its editing domain. This Salinibacter ruber (strain DSM 13855 / M31) protein is Alanine--tRNA ligase.